The primary structure comprises 317 residues: Biotin synthase (317 aa).

The Radical SAM core domain occupies 42–260 (NRIQLSTLLS…IAVTRLCMPK (219 aa)). The [4Fe-4S] cluster site is built by cysteine 57, cysteine 61, and cysteine 64. [2Fe-2S] cluster is bound by residues cysteine 101, cysteine 132, cysteine 192, and arginine 264.

Belongs to the radical SAM superfamily. Biotin synthase family. Homodimer. [4Fe-4S] cluster serves as cofactor. It depends on [2Fe-2S] cluster as a cofactor.

It catalyses the reaction (4R,5S)-dethiobiotin + (sulfur carrier)-SH + 2 reduced [2Fe-2S]-[ferredoxin] + 2 S-adenosyl-L-methionine = (sulfur carrier)-H + biotin + 2 5'-deoxyadenosine + 2 L-methionine + 2 oxidized [2Fe-2S]-[ferredoxin]. It participates in cofactor biosynthesis; biotin biosynthesis; biotin from 7,8-diaminononanoate: step 2/2. Its function is as follows. Catalyzes the conversion of dethiobiotin (DTB) to biotin by the insertion of a sulfur atom into dethiobiotin via a radical-based mechanism. The sequence is that of Biotin synthase from Thiobacillus denitrificans (strain ATCC 25259 / T1).